The following is a 930-amino-acid chain: Isoleucine--tRNA ligase (930 aa).

The short motif at 57 to 67 (PYANGNIHVGH) is the 'HIGH' region element. Glutamate 554 contacts L-isoleucyl-5'-AMP. The 'KMSKS' region motif lies at 595 to 599 (KMSKS). Lysine 598 is an ATP binding site. Cysteine 888, cysteine 891, cysteine 908, and cysteine 911 together coordinate Zn(2+).

This sequence belongs to the class-I aminoacyl-tRNA synthetase family. IleS type 1 subfamily. In terms of assembly, monomer. Zn(2+) serves as cofactor.

It localises to the cytoplasm. It carries out the reaction tRNA(Ile) + L-isoleucine + ATP = L-isoleucyl-tRNA(Ile) + AMP + diphosphate. Its function is as follows. Catalyzes the attachment of isoleucine to tRNA(Ile). As IleRS can inadvertently accommodate and process structurally similar amino acids such as valine, to avoid such errors it has two additional distinct tRNA(Ile)-dependent editing activities. One activity is designated as 'pretransfer' editing and involves the hydrolysis of activated Val-AMP. The other activity is designated 'posttransfer' editing and involves deacylation of mischarged Val-tRNA(Ile). The chain is Isoleucine--tRNA ligase from Streptococcus pneumoniae (strain ATCC BAA-255 / R6).